Consider the following 420-residue polypeptide: MIOREX complex component 9 (420 aa).

The next 2 helical transmembrane spans lie at 125 to 145 and 149 to 169; these read VYKV…TFIL and IVVI…FFFF.

Associates with the mitochondrial ribosome.

The protein resides in the mitochondrion. It is found in the mitochondrion membrane. In terms of biological role, component of MIOREX complexes, large expressome-like assemblies of ribosomes with factors involved in all the steps of post-transcriptional gene expression. This Saccharomyces cerevisiae (strain ATCC 204508 / S288c) (Baker's yeast) protein is MIOREX complex component 9.